The following is a 1026-amino-acid chain: Chromodomain-helicase-DNA-binding protein 1-like (1026 aa).

The 166-residue stretch at 47-212 folds into the Helicase ATP-binding domain; that stretch reads SLCMKNQQGC…YSLLTFIQPS (166 aa). 60–67 provides a ligand contact to ATP; it reads DEMGLGKT. Residues 163-166 carry the DEAH box motif; it reads DEAH. The region spanning 340-494 is the Helicase C-terminal domain; it reads LLDSMLAYLQ…EGRFSLLDQA (155 aa). Positions 540–668 form a coiled coil; the sequence is LTDEEHAKLN…EELNYKKKMA (129 aa). The tract at residues 594–628 is regulatory linker segment (RLS); it reads AEMEDAEKEGRALRNKAGVSLSGPLINPARKKRPL. Positions 606–655 are disordered; sequence LRNKAGVSLSGPLINPARKKRPLTEAELEERRQKRQAAAAKRAKLQEERK. The tract at residues 608–666 is required for ATPase activity; the sequence is NKAGVSLSGPLINPARKKRPLTEAELEERRQKRQAAAAKRAKLQEERKKQQEELNYKKK. The Macro domain maps to 697–870; it reads HVSFSSTDSD…IFTSIYYYRR (174 aa). The segment covering 877–907 has biased composition (low complexity); sequence VSSTASTTTPSSSKPAASSPSESPHSSSPPA. The segment at 877 to 929 is disordered; the sequence is VSSTASTTTPSSSKPAASSPSESPHSSSPPANREGLTKSAELSTTSHEGPGAP. Residues 930–1023 enclose the BRCT domain; that stretch reads GLADFMRGVH…RKVSVSKYVI (94 aa).

It belongs to the SNF2/RAD54 helicase family. In terms of assembly, interacts with nucleosomes; interacts with the acidic patch of histones.

It localises to the nucleus. The protein localises to the chromosome. The enzyme catalyses ATP + H2O = ADP + phosphate + H(+). Its activity is regulated as follows. Adopts an inactive conformation in absence of DNA damage. Binding to poly-ADP-ribosylated histones activates the ATP-dependent chromatin remodeler activity. Functionally, ATP-dependent chromatin remodeler that mediates chromatin-remodeling following DNA damage. Recruited to DNA damage sites through interaction with poly-ADP-ribose: specifically recognizes and binds histones that are poly-ADP-ribosylated on serine residues in response to DNA damage. Poly-ADP-ribose-binding activates the ATP-dependent chromatin remodeler activity, thereby regulating chromatin during DNA repair. Catalyzes nucleosome sliding away from DNA breaks in an ATP-dependent manner. This chain is Chromodomain-helicase-DNA-binding protein 1-like (chd1l), found in Danio rerio (Zebrafish).